A 212-amino-acid polypeptide reads, in one-letter code: Adenylate kinase (212 aa).

10–15 provides a ligand contact to ATP; sequence GSGKGT. The NMP stretch occupies residues 30–59; it reads STGDLMRKEINDETPLGIECARYMNEGRLV. AMP is bound by residues T31, R36, 57–59, and Q90; that span reads RLV. Positions 124–161 are LID; sequence GRLICPKCKVSYHIISRKPKLEGICDNDGTELVRRPDD. R125 is an ATP binding site. Zn(2+) contacts are provided by C128 and C131. An ATP-binding site is contributed by 134–135; it reads SY. C148 and D151 together coordinate Zn(2+). AMP contacts are provided by R158 and R169. Position 198 (N198) interacts with ATP.

This sequence belongs to the adenylate kinase family. Monomer.

It is found in the cytoplasm. The enzyme catalyses AMP + ATP = 2 ADP. It functions in the pathway purine metabolism; AMP biosynthesis via salvage pathway; AMP from ADP: step 1/1. Functionally, catalyzes the reversible transfer of the terminal phosphate group between ATP and AMP. Plays an important role in cellular energy homeostasis and in adenine nucleotide metabolism. In Mesoplasma florum (strain ATCC 33453 / NBRC 100688 / NCTC 11704 / L1) (Acholeplasma florum), this protein is Adenylate kinase.